Here is a 464-residue protein sequence, read N- to C-terminus: ATP synthase subunit beta 1 (464 aa).

Gly153 to Thr160 is a binding site for ATP.

It belongs to the ATPase alpha/beta chains family. As to quaternary structure, F-type ATPases have 2 components, CF(1) - the catalytic core - and CF(0) - the membrane proton channel. CF(1) has five subunits: alpha(3), beta(3), gamma(1), delta(1), epsilon(1). CF(0) has three main subunits: a(1), b(2) and c(9-12). The alpha and beta chains form an alternating ring which encloses part of the gamma chain. CF(1) is attached to CF(0) by a central stalk formed by the gamma and epsilon chains, while a peripheral stalk is formed by the delta and b chains.

The protein localises to the cell inner membrane. It catalyses the reaction ATP + H2O + 4 H(+)(in) = ADP + phosphate + 5 H(+)(out). In terms of biological role, produces ATP from ADP in the presence of a proton gradient across the membrane. The catalytic sites are hosted primarily by the beta subunits. The chain is ATP synthase subunit beta 1 from Burkholderia mallei (strain SAVP1).